Reading from the N-terminus, the 61-residue chain is MAKKSMIAKQQRKAKFSTQAYTRCNICGRPHSVYRDFGLCRVCLRKMANEGLIPGMRKASW.

The Zn(2+) site is built by Cys24, Cys27, Cys40, and Cys43.

It belongs to the universal ribosomal protein uS14 family. Zinc-binding uS14 subfamily. As to quaternary structure, part of the 30S ribosomal subunit. Contacts proteins S3 and S10. The cofactor is Zn(2+).

Functionally, binds 16S rRNA, required for the assembly of 30S particles and may also be responsible for determining the conformation of the 16S rRNA at the A site. The polypeptide is Small ribosomal subunit protein uS14 (Sulfurovum sp. (strain NBC37-1)).